Reading from the N-terminus, the 190-residue chain is Holliday junction branch migration complex subunit RuvA (190 aa).

A domain I region spans residues 1–63 (MIRKINATIE…EWNTSLYIFK (63 aa)). The domain II stretch occupies residues 64–138 (DKIERDVFES…NSFSAYSTGA (75 aa)). The flexible linker stretch occupies residues 138–142 (ADTQS). The segment at 143 to 190 (YGNNNLKEAIEALETLGFQRYEIMKVIGQLDLEDLKTEEIIKECLTRL) is domain III.

Belongs to the RuvA family. As to quaternary structure, homotetramer. Forms an RuvA(8)-RuvB(12)-Holliday junction (HJ) complex. HJ DNA is sandwiched between 2 RuvA tetramers; dsDNA enters through RuvA and exits via RuvB. An RuvB hexamer assembles on each DNA strand where it exits the tetramer. Each RuvB hexamer is contacted by two RuvA subunits (via domain III) on 2 adjacent RuvB subunits; this complex drives branch migration. In the full resolvosome a probable DNA-RuvA(4)-RuvB(12)-RuvC(2) complex forms which resolves the HJ.

It localises to the cytoplasm. Functionally, the RuvA-RuvB-RuvC complex processes Holliday junction (HJ) DNA during genetic recombination and DNA repair, while the RuvA-RuvB complex plays an important role in the rescue of blocked DNA replication forks via replication fork reversal (RFR). RuvA specifically binds to HJ cruciform DNA, conferring on it an open structure. The RuvB hexamer acts as an ATP-dependent pump, pulling dsDNA into and through the RuvAB complex. HJ branch migration allows RuvC to scan DNA until it finds its consensus sequence, where it cleaves and resolves the cruciform DNA. The protein is Holliday junction branch migration complex subunit RuvA of Petrotoga mobilis (strain DSM 10674 / SJ95).